The chain runs to 626 residues: ABC transporter G family member 8 (626 aa).

Residues 56–300 form the ABC transporter domain; it reads VNLDNKTENS…SLGYPCPNNT (245 aa). 90–97 contributes to the ATP binding site; that stretch reads GPSGSGKS. Residues 373-621 form the ABC transmembrane type-2 domain; sequence GNALSRVITA…SLSYFALHFL (249 aa). 7 consecutive transmembrane segments (helical) span residues 376–396, 409–429, 447–467, 485–505, 515–535, 543–563, and 600–620; these read LSRVITAIVIGALFGSCFAGL, TLFFLTTGLMLSPFSMITLFL, FPYFLSMITVELTIEFFVTLV, FFFAVLVYSFIHSLSTFFISS, LTFSYASSLSVVFMLFAGFYV, AFGWLHWVNPAFYGYSSVVIN, and FGVLVAWATFFYSLSYFALHF.

Belongs to the ABC transporter superfamily. ABCG family. Eye pigment precursor importer (TC 3.A.1.204) subfamily.

The protein resides in the membrane. The polypeptide is ABC transporter G family member 8 (abcG8) (Dictyostelium discoideum (Social amoeba)).